Reading from the N-terminus, the 359-residue chain is tRNA-specific 2-thiouridylase MnmA (359 aa).

Residues 6-13 (AMSGGVDS) and Leu32 contribute to the ATP site. The active-site Nucleophile is Cys101. An intrachain disulfide couples Cys101 to Cys193. Position 125 (Gly125) interacts with ATP. Positions 143–145 (KDQ) are interaction with tRNA. Residue Cys193 is the Cysteine persulfide intermediate of the active site.

This sequence belongs to the MnmA/TRMU family.

Its subcellular location is the cytoplasm. The enzyme catalyses S-sulfanyl-L-cysteinyl-[protein] + uridine(34) in tRNA + AH2 + ATP = 2-thiouridine(34) in tRNA + L-cysteinyl-[protein] + A + AMP + diphosphate + H(+). Catalyzes the 2-thiolation of uridine at the wobble position (U34) of tRNA, leading to the formation of s(2)U34. In Mycobacterium sp. (strain JLS), this protein is tRNA-specific 2-thiouridylase MnmA.